A 301-amino-acid chain; its full sequence is tRNA pseudouridine synthase B (301 aa).

Asp45 functions as the Nucleophile in the catalytic mechanism.

The protein belongs to the pseudouridine synthase TruB family. Type 1 subfamily.

It carries out the reaction uridine(55) in tRNA = pseudouridine(55) in tRNA. In terms of biological role, responsible for synthesis of pseudouridine from uracil-55 in the psi GC loop of transfer RNAs. The protein is tRNA pseudouridine synthase B of Streptomyces avermitilis (strain ATCC 31267 / DSM 46492 / JCM 5070 / NBRC 14893 / NCIMB 12804 / NRRL 8165 / MA-4680).